Here is a 448-residue protein sequence, read N- to C-terminus: MSGSYDDSVGVEVSSDSFWEVGNYKRTVKRIDDGHRLCNDLMNCIHERARIEKVYAQQLTEWAKRWKQLVEKGPQYGTVERAWCAFMSEAEKVSELHLEVKGSLMNEDFEKIKNWQKEAFHKQMMGGFKETKEAEDGFRKAQKPWAKKLKEVEAAKKAYHAACKEEKLAISRETNSKADPALNPEQLKKLQDKVERSKQDVLKTKAKYEKSLKELDNATPQYMENMEQVFEQCQQFEEKRLRFFREVLLEVQKHLDLSNVASYKNIYRELEQNIKTADAVEDLRWFRANQGPGMSMNWPQFEDDEWSADLNRTLSRREKKKASDGVTLTGINQTGDQVSQPNKHSSVSSYEKNQSYPTDWSDEESNNPFSSTDAKGDTNPFDEDTSPVMEVRVRALYDYEGQEQDELSFKAGDELTKMENEDEQGWCKGRLDNGQVGLYPANYVEPIQ.

The region spanning 11 to 282 (VEVSSDSFWE…NIKTADAVED (272 aa)) is the F-BAR domain. The stretch at 25-274 (KRTVKRIDDG…NIYRELEQNI (250 aa)) forms a coiled coil. The segment at 315–386 (SRREKKKASD…DTNPFDEDTS (72 aa)) is disordered. Residues 329 to 358 (TGINQTGDQVSQPNKHSSVSSYEKNQSYPT) are compositionally biased toward polar residues. The NPF1 motif lies at 367 to 369 (NPF). The NPF2 motif lies at 379 to 381 (NPF). The 61-residue stretch at 388–448 (VMEVRVRALY…YPANYVEPIQ (61 aa)) folds into the SH3 domain.

The protein belongs to the PACSIN family. Post-translationally, phosphorylated on serine residues. As to expression, detected in intestine, cardiac muscle, lung and brain (at protein level). Expressed in all tissues tested, including, gizzard, liver, cardiac muscle, skeletal muscle and skin.

The protein localises to the cytoplasm. Its subcellular location is the cytoskeleton. It localises to the cytoplasmic vesicle membrane. It is found in the cell projection. The protein resides in the ruffle membrane. The protein localises to the early endosome. Its subcellular location is the recycling endosome membrane. It localises to the cell membrane. It is found in the membrane. The protein resides in the caveola. The protein localises to the cell junction. Its subcellular location is the focal adhesion. Its function is as follows. Regulates the morphogenesis and endocytosis of caveolae. Lipid-binding protein that is able to promote the tubulation of the phosphatidic acid-containing membranes it preferentially binds. Plays a role in intracellular vesicle-mediated transport. Involved in the endocytosis of cell-surface receptors like the EGF receptor, contributing to its internalization in the absence of EGF stimulus. Essential for endothelial organization in sprouting angiogenesis, modulates CDH5-based junctions. Facilitates endothelial front-rear polarity during migration by recruiting EHD4 and MICALL1 to asymmetric adherens junctions between leader and follower cells. The polypeptide is Protein kinase C and casein kinase substrate in neurons protein 2 (PACSIN2) (Gallus gallus (Chicken)).